A 55-amino-acid polypeptide reads, in one-letter code: Large ribosomal subunit protein bL33 (55 aa).

Residues 1 to 11 (MAKGARDKIKL) show a composition bias toward basic and acidic residues. The disordered stretch occupies residues 1–24 (MAKGARDKIKLESTAGTGHFYTTT). Residues 14-24 (TAGTGHFYTTT) are compositionally biased toward polar residues.

This sequence belongs to the bacterial ribosomal protein bL33 family.

This is Large ribosomal subunit protein bL33 from Burkholderia multivorans (strain ATCC 17616 / 249).